The following is a 295-amino-acid chain: Xyloglucan endotransglucosylase protein 2 (295 aa).

The N-terminal stretch at Met1–Gly23 is a signal peptide. One can recognise a GH16 domain in the interval Ala24–Tyr222. Residue Glu108 is the Nucleophile of the active site. Catalysis depends on Glu112, which acts as the Proton donor. Position 112 (Glu112) interacts with xyloglucan. Residue Asn116 is glycosylated (N-linked (GlcNAc...) asparagine). Residues Gln125 to Asn127, Asp135 to Glu137, Asp201 to Trp202, and Gly206 each bind xyloglucan. Disulfide bonds link Cys230/Cys239 and Cys276/Cys289. Position 281 (Arg281) interacts with xyloglucan.

The protein belongs to the glycosyl hydrolase 16 family. XTH group 1 subfamily. In terms of processing, contains at least one intrachain disulfide bond essential for its enzymatic activity. As to expression, expressed in fruit pulp.

It is found in the secreted. Its subcellular location is the cell wall. It localises to the extracellular space. The protein localises to the apoplast. The enzyme catalyses breaks a beta-(1-&gt;4) bond in the backbone of a xyloglucan and transfers the xyloglucanyl segment on to O-4 of the non-reducing terminal glucose residue of an acceptor, which can be a xyloglucan or an oligosaccharide of xyloglucan.. In terms of biological role, catalyzes xyloglucan endotransglycosylation (XET). Cleaves and religates xyloglucan polymers. Does not catalyze xyloglucan endohydrolysis (XEH). Probably involved in cell wall restructuring during fruit ripening and postharvest fruit softening. The protein is Xyloglucan endotransglucosylase protein 2 of Diospyros kaki (Kaki persimmon).